A 142-amino-acid chain; its full sequence is Coactosin-like protein (142 aa).

The residue at position 2 (Ala2) is an N-acetylalanine. The ADF-H domain maps to 2-130 (ATKIDKEACR…EEDFIRSELK (129 aa)). The interval 66 to 75 (TGDAMSKRSK) is flexible and important for F-actin binding. Lys102 is modified (N6-acetyllysine). Phosphoserine is present on Ser141.

It belongs to the actin-binding proteins ADF family. Coactosin subfamily. In terms of assembly, interacts with 5-lipoxygenase (ALOX5/5LO) in a calcium-independent manner. Binds to F-actin with a stoichiometry of 1:2.

Its subcellular location is the cytoplasm. The protein resides in the cytoskeleton. It localises to the nucleus. Binds to F-actin in a calcium-independent manner. Has no direct effect on actin depolymerization. Acts as a chaperone for ALOX5 (5LO), influencing both its stability and activity in leukotrienes synthesis. The protein is Coactosin-like protein (Cotl1) of Mus musculus (Mouse).